A 354-amino-acid polypeptide reads, in one-letter code: Probable L-ascorbate-6-phosphate lactonase UlaG (354 aa).

It belongs to the UlaG family. A divalent metal cation serves as cofactor.

The protein resides in the cytoplasm. The catalysed reaction is L-ascorbate 6-phosphate + H2O = 3-dehydro-L-gulonate 6-phosphate. Its pathway is cofactor degradation; L-ascorbate degradation; D-xylulose 5-phosphate from L-ascorbate: step 1/4. In terms of biological role, probably catalyzes the hydrolysis of L-ascorbate-6-P into 3-keto-L-gulonate-6-P. Is essential for L-ascorbate utilization under anaerobic conditions. The polypeptide is Probable L-ascorbate-6-phosphate lactonase UlaG (Shigella boydii serotype 18 (strain CDC 3083-94 / BS512)).